We begin with the raw amino-acid sequence, 144 residues long: MKPGEYVLADAPVVCNRGREAVELSVTNRGDRPVQVGSHFHFAEANRALDFDRQAALGCRLDIPAGTAVRLEPGDETTVKLIPLGGDRVVYGFRDMVDGSLDPHEAAGLHAAPAAPAIPARHESAAGDAPSPLKERAGFDNETR.

The span at 110 to 119 (HAAPAAPAIP) shows a compositional bias: low complexity. The interval 110 to 144 (HAAPAAPAIPARHESAAGDAPSPLKERAGFDNETR) is disordered. The segment covering 133 to 144 (LKERAGFDNETR) has biased composition (basic and acidic residues).

Belongs to the urease beta subunit family. Heterotrimer of UreA (gamma), UreB (beta) and UreC (alpha) subunits. Three heterotrimers associate to form the active enzyme.

It localises to the cytoplasm. It carries out the reaction urea + 2 H2O + H(+) = hydrogencarbonate + 2 NH4(+). It participates in nitrogen metabolism; urea degradation; CO(2) and NH(3) from urea (urease route): step 1/1. The sequence is that of Urease subunit beta from Micrococcus luteus (strain ATCC 4698 / DSM 20030 / JCM 1464 / CCM 169 / CCUG 5858 / IAM 1056 / NBRC 3333 / NCIMB 9278 / NCTC 2665 / VKM Ac-2230) (Micrococcus lysodeikticus).